The sequence spans 417 residues: Serine hydroxymethyltransferase (417 aa).

(6S)-5,6,7,8-tetrahydrofolate is bound by residues Leu-121 and 125–127; that span reads GHL. Residue Lys-229 is modified to N6-(pyridoxal phosphate)lysine. 355 to 357 lines the (6S)-5,6,7,8-tetrahydrofolate pocket; sequence SPF.

This sequence belongs to the SHMT family. As to quaternary structure, homodimer. The cofactor is pyridoxal 5'-phosphate.

Its subcellular location is the cytoplasm. The catalysed reaction is (6R)-5,10-methylene-5,6,7,8-tetrahydrofolate + glycine + H2O = (6S)-5,6,7,8-tetrahydrofolate + L-serine. It participates in one-carbon metabolism; tetrahydrofolate interconversion. It functions in the pathway amino-acid biosynthesis; glycine biosynthesis; glycine from L-serine: step 1/1. Functionally, catalyzes the reversible interconversion of serine and glycine with tetrahydrofolate (THF) serving as the one-carbon carrier. This reaction serves as the major source of one-carbon groups required for the biosynthesis of purines, thymidylate, methionine, and other important biomolecules. Also exhibits THF-independent aldolase activity toward beta-hydroxyamino acids, producing glycine and aldehydes, via a retro-aldol mechanism. In Buchnera aphidicola subsp. Acyrthosiphon pisum (strain APS) (Acyrthosiphon pisum symbiotic bacterium), this protein is Serine hydroxymethyltransferase.